The following is a 115-amino-acid chain: Large ribosomal subunit protein bL19 (115 aa).

It belongs to the bacterial ribosomal protein bL19 family.

Functionally, this protein is located at the 30S-50S ribosomal subunit interface and may play a role in the structure and function of the aminoacyl-tRNA binding site. The chain is Large ribosomal subunit protein bL19 from Kosmotoga olearia (strain ATCC BAA-1733 / DSM 21960 / TBF 19.5.1).